Here is a 70-residue protein sequence, read N- to C-terminus: DNA-directed RNA polymerase subunit omega (70 aa).

The protein belongs to the RNA polymerase subunit omega family. The RNAP catalytic core consists of 2 alpha, 1 beta, 1 beta' and 1 omega subunit. When a sigma factor is associated with the core the holoenzyme is formed, which can initiate transcription.

The enzyme catalyses RNA(n) + a ribonucleoside 5'-triphosphate = RNA(n+1) + diphosphate. In terms of biological role, promotes RNA polymerase assembly. Latches the N- and C-terminal regions of the beta' subunit thereby facilitating its interaction with the beta and alpha subunits. This Methylobacillus flagellatus (strain ATCC 51484 / DSM 6875 / VKM B-1610 / KT) protein is DNA-directed RNA polymerase subunit omega.